Here is a 386-residue protein sequence, read N- to C-terminus: Phosphoglycerate kinase (386 aa).

Substrate-binding positions include 21 to 23 (DLN), R36, 59 to 62 (HLGR), R112, and R145. ATP-binding positions include K196, E313, and 339–342 (GGDT).

The protein belongs to the phosphoglycerate kinase family. As to quaternary structure, monomer.

It localises to the cytoplasm. It carries out the reaction (2R)-3-phosphoglycerate + ATP = (2R)-3-phospho-glyceroyl phosphate + ADP. It functions in the pathway carbohydrate degradation; glycolysis; pyruvate from D-glyceraldehyde 3-phosphate: step 2/5. The sequence is that of Phosphoglycerate kinase (pgk) from Haemophilus influenzae (strain ATCC 51907 / DSM 11121 / KW20 / Rd).